We begin with the raw amino-acid sequence, 81 residues long: Putative defensin-like protein 26 (81 aa).

An N-terminal signal peptide occupies residues 1–21 (MASLKVFSFALLIVLTFSVIG). Disulfide bonds link cysteine 33–cysteine 81 and cysteine 52–cysteine 77.

This sequence belongs to the DEFL family.

It localises to the secreted. The polypeptide is Putative defensin-like protein 26 (Arabidopsis thaliana (Mouse-ear cress)).